Reading from the N-terminus, the 162-residue chain is Caveolin-2 (162 aa).

Residues 1–86 are Cytoplasmic-facing; sequence MGLETEKADA…FEVSKYLIYK (86 aa). The residue at position 19 (Y19) is a Phosphotyrosine; by SRC. Positions 19–40 are disordered; that stretch reads YSRHSGLGYPEPEKCAKSTQDR. Residues S20 and S23 each carry the phosphoserine modification. Residue Y27 is modified to Phosphotyrosine; by SRC. The segment covering 29–40 has biased composition (basic and acidic residues); it reads EPEKCAKSTQDR. S36 is modified (phosphoserine). An intramembrane region (helical) is located at residues 87–107; sequence VLTVLLAIPLAFVAGILFATL. Residues 108 to 162 lie on the Cytoplasmic side of the membrane; the sequence is SCLHIWIVVPFVKTCLMVLPSVQTVWHSITDGFIAPLYKSMGLIFSSISLRLSPE.

The protein belongs to the caveolin family. Monomer or homodimer. Interacts with CAV1; the interaction forms a stable heterooligomeric complex that is required for targeting to lipid rafts and for caveolae formation. Tyrosine phosphorylated forms do not form heterooligomers with the Tyr-19-phosphorylated form existing as a monomer or dimer, and the Tyr-27-form as a monomer only. Interacts (tyrosine phosphorylated form) with the SH2 domain-containing proteins, RASA1, NCK1 and SRC. Interacts (tyrosine phosphorylated form) with INSR, the interaction (Tyr-27-phosphorylated form) is increased on insulin stimulation. Interacts (Tyr-19 phosphorylated form) with MAPK1 (phosphorylated form); the interaction, promoted by insulin, leads to nuclear location and MAPK1 activation. Interacts with STAT3; the interaction is increased on insulin-induced tyrosine phosphorylation leading to STAT activation. Post-translationally, phosphorylated on serine and tyrosine residues. CAV1 promotes phosphorylation on Ser-23 which then targets the complex to the plasma membrane, lipid rafts and caveolae. Phosphorylation on Ser-36 appears to modulate mitosis in endothelial cells. Phosphorylation on both Tyr-19 and Tyr-27 is required for insulin-induced 'Ser-727' phosphorylation of STAT3 and its activation. Phosphorylation on Tyr-19 is required for insulin-induced phosphorylation of MAPK1 and DNA binding of STAT3. Tyrosine phosphorylation is induced by both EGF and insulin (By. similarity).

Its subcellular location is the nucleus. It is found in the cytoplasm. It localises to the golgi apparatus membrane. The protein resides in the cell membrane. The protein localises to the membrane. Its subcellular location is the caveola. Its function is as follows. May act as a scaffolding protein within caveolar membranes. Interacts directly with G-protein alpha subunits and can functionally regulate their activity. Acts as an accessory protein in conjunction with CAV1 in targeting to lipid rafts and driving caveolae formation. The Ser-36 phosphorylated form has a role in modulating mitosis in endothelial cells. Positive regulator of cellular mitogenesis of the MAPK signaling pathway. Required for the insulin-stimulated nuclear translocation and activation of MAPK1 and STAT3, and the subsequent regulation of cell cycle progression. The chain is Caveolin-2 (CAV2) from Didelphis virginiana (North American opossum).